The following is a 341-amino-acid chain: S-adenosylmethionine:tRNA ribosyltransferase-isomerase (341 aa).

It belongs to the QueA family. In terms of assembly, monomer.

It is found in the cytoplasm. The enzyme catalyses 7-aminomethyl-7-carbaguanosine(34) in tRNA + S-adenosyl-L-methionine = epoxyqueuosine(34) in tRNA + adenine + L-methionine + 2 H(+). Its pathway is tRNA modification; tRNA-queuosine biosynthesis. Its function is as follows. Transfers and isomerizes the ribose moiety from AdoMet to the 7-aminomethyl group of 7-deazaguanine (preQ1-tRNA) to give epoxyqueuosine (oQ-tRNA). The sequence is that of S-adenosylmethionine:tRNA ribosyltransferase-isomerase from Desulfitobacterium hafniense (strain DSM 10664 / DCB-2).